The sequence spans 359 residues: Outer membrane protein P2 (359 aa).

A signal peptide spans 1 to 20 (MKKTLAALIVGAFAASAANA).

Belongs to the Gram-negative porin family. As to quaternary structure, homotrimer.

It is found in the cell outer membrane. Functionally, forms pores that allow passive diffusion of small molecules across the outer membrane. In Haemophilus influenzae (strain ATCC 51907 / DSM 11121 / KW20 / Rd), this protein is Outer membrane protein P2 (ompP2).